The primary structure comprises 450 residues: Phosphoglucosamine mutase (450 aa).

Residue S102 is the Phosphoserine intermediate of the active site. Residues S102, D244, D246, and D248 each contribute to the Mg(2+) site. The residue at position 102 (S102) is a Phosphoserine.

The protein belongs to the phosphohexose mutase family. Mg(2+) serves as cofactor. In terms of processing, activated by phosphorylation.

The enzyme catalyses alpha-D-glucosamine 1-phosphate = D-glucosamine 6-phosphate. In terms of biological role, catalyzes the conversion of glucosamine-6-phosphate to glucosamine-1-phosphate. This chain is Phosphoglucosamine mutase, found in Syntrophomonas wolfei subsp. wolfei (strain DSM 2245B / Goettingen).